Consider the following 376-residue polypeptide: Crh-like protein 4 (376 aa).

Residues 1-21 (MFPKIFLTAATALLSAKSTFA) form the signal peptide. A GH16 domain is found at 22-229 (QTYSSCNPLF…WARGPTDYSN (208 aa)). A disulfide bridge connects residues C27 and C35. E119 functions as the Nucleophile in the catalytic mechanism. The active-site Proton donor is E123. Residues E123, K202, W206, and T217 each contribute to the chitin site. Residue S346 is the site of GPI-anchor amidated serine attachment. The propeptide at 347–376 (ASPINISRINPLLLCGPFTFFFFAAIRRWP) is removed in mature form. A glycan (N-linked (GlcNAc...) asparagine) is linked at N351.

It belongs to the glycosyl hydrolase 16 family. CRH1 subfamily.

It is found in the cell membrane. It catalyses the reaction Random endo-hydrolysis of N-acetyl-beta-D-glucosaminide (1-&gt;4)-beta-linkages in chitin and chitodextrins.. Its function is as follows. Dual chitinase/transglycosylase that plays a role in cell wall architecture. Chitinase and transglycosylase activities are coupled. Required for the polysaccharide cross-linking at the septa and the cell wall. More specifically, transfers chitin to 1,6-beta-glucan in the cell wall. The polypeptide is Crh-like protein 4 (Botryotinia fuckeliana (strain B05.10) (Noble rot fungus)).